A 207-amino-acid chain; its full sequence is LexA repressor (207 aa).

The H-T-H motif DNA-binding region spans 29 to 49; the sequence is VREICSAVDLSSTSTVHGHLA. Catalysis depends on for autocatalytic cleavage activity residues Ser128 and Lys166.

The protein belongs to the peptidase S24 family. Homodimer.

The catalysed reaction is Hydrolysis of Ala-|-Gly bond in repressor LexA.. Its function is as follows. Represses a number of genes involved in the response to DNA damage (SOS response), including recA and lexA. In the presence of single-stranded DNA, RecA interacts with LexA causing an autocatalytic cleavage which disrupts the DNA-binding part of LexA, leading to derepression of the SOS regulon and eventually DNA repair. The polypeptide is LexA repressor (Lactobacillus gasseri (strain ATCC 33323 / DSM 20243 / BCRC 14619 / CIP 102991 / JCM 1131 / KCTC 3163 / NCIMB 11718 / NCTC 13722 / AM63)).